The sequence spans 311 residues: Methionyl-tRNA formyltransferase (311 aa).

109 to 112 contacts (6S)-5,6,7,8-tetrahydrofolate; the sequence is SLLP.

Belongs to the Fmt family.

The enzyme catalyses L-methionyl-tRNA(fMet) + (6R)-10-formyltetrahydrofolate = N-formyl-L-methionyl-tRNA(fMet) + (6S)-5,6,7,8-tetrahydrofolate + H(+). Attaches a formyl group to the free amino group of methionyl-tRNA(fMet). The formyl group appears to play a dual role in the initiator identity of N-formylmethionyl-tRNA by promoting its recognition by IF2 and preventing the misappropriation of this tRNA by the elongation apparatus. The chain is Methionyl-tRNA formyltransferase from Kosmotoga olearia (strain ATCC BAA-1733 / DSM 21960 / TBF 19.5.1).